A 425-amino-acid polypeptide reads, in one-letter code: Enolase (425 aa).

Glutamine 162 contributes to the (2R)-2-phosphoglycerate binding site. Glutamate 204 functions as the Proton donor in the catalytic mechanism. Mg(2+) is bound by residues aspartate 241, glutamate 284, and aspartate 311. The (2R)-2-phosphoglycerate site is built by lysine 336, arginine 365, serine 366, and lysine 387. Lysine 336 functions as the Proton acceptor in the catalytic mechanism.

Belongs to the enolase family. The cofactor is Mg(2+).

It is found in the cytoplasm. It localises to the secreted. Its subcellular location is the cell surface. The enzyme catalyses (2R)-2-phosphoglycerate = phosphoenolpyruvate + H2O. It functions in the pathway carbohydrate degradation; glycolysis; pyruvate from D-glyceraldehyde 3-phosphate: step 4/5. Its function is as follows. Catalyzes the reversible conversion of 2-phosphoglycerate (2-PG) into phosphoenolpyruvate (PEP). It is essential for the degradation of carbohydrates via glycolysis. The chain is Enolase from Brucella anthropi (strain ATCC 49188 / DSM 6882 / CCUG 24695 / JCM 21032 / LMG 3331 / NBRC 15819 / NCTC 12168 / Alc 37) (Ochrobactrum anthropi).